A 348-amino-acid polypeptide reads, in one-letter code: Ketol-acid reductoisomerase (NADP(+)) (348 aa).

The region spanning 1–179 is the KARI N-terminal Rossmann domain; sequence MDVHYDADPA…GGTHAGVIET (179 aa). Residues 22 to 25, Arg-45, Ser-48, Ser-50, and 80 to 83 contribute to the NADP(+) site; these read YGSQ and DQHQ. His-105 is a catalytic residue. Gly-131 serves as a coordination point for NADP(+). Residues 180 to 325 form the KARI C-terminal knotted domain; it reads TFKDETETDL…QTLRGMMPWL (146 aa). 4 residues coordinate Mg(2+): Asp-188, Glu-192, Glu-224, and Glu-228. Ser-249 contributes to the substrate binding site. Positions 323–348 are disordered; sequence PWLNGDETSADEDAPDAADTAPASSS. Residues 339–348 show a composition bias toward low complexity; sequence AADTAPASSS.

The protein belongs to the ketol-acid reductoisomerase family. It depends on Mg(2+) as a cofactor.

The catalysed reaction is (2R)-2,3-dihydroxy-3-methylbutanoate + NADP(+) = (2S)-2-acetolactate + NADPH + H(+). The enzyme catalyses (2R,3R)-2,3-dihydroxy-3-methylpentanoate + NADP(+) = (S)-2-ethyl-2-hydroxy-3-oxobutanoate + NADPH + H(+). Its pathway is amino-acid biosynthesis; L-isoleucine biosynthesis; L-isoleucine from 2-oxobutanoate: step 2/4. It functions in the pathway amino-acid biosynthesis; L-valine biosynthesis; L-valine from pyruvate: step 2/4. Functionally, involved in the biosynthesis of branched-chain amino acids (BCAA). Catalyzes an alkyl-migration followed by a ketol-acid reduction of (S)-2-acetolactate (S2AL) to yield (R)-2,3-dihydroxy-isovalerate. In the isomerase reaction, S2AL is rearranged via a Mg-dependent methyl migration to produce 3-hydroxy-3-methyl-2-ketobutyrate (HMKB). In the reductase reaction, this 2-ketoacid undergoes a metal-dependent reduction by NADPH to yield (R)-2,3-dihydroxy-isovalerate. The protein is Ketol-acid reductoisomerase (NADP(+)) of Salinibacter ruber (strain DSM 13855 / M31).